We begin with the raw amino-acid sequence, 236 residues long: Small ribosomal subunit protein uS2c (236 aa).

The protein belongs to the universal ribosomal protein uS2 family.

It localises to the plastid. Its subcellular location is the chloroplast. This is Small ribosomal subunit protein uS2c (rps2) from Platanus occidentalis (Sycamore).